A 66-amino-acid chain; its full sequence is Sodium channel neurotoxin MeuNaTxalpha-7 (66 aa).

Residues 2 to 64 (RDGYIADDKN…VPIKVSGKCN (63 aa)) enclose the LCN-type CS-alpha/beta domain. Disulfide bonds link Cys-12/Cys-63, Cys-16/Cys-36, Cys-22/Cys-46, and Cys-26/Cys-48. Asn-64 bears the Asparagine amide mark.

This sequence belongs to the long (4 C-C) scorpion toxin superfamily. Sodium channel inhibitor family. Alpha subfamily. Expressed by the venom gland.

It localises to the secreted. Functionally, alpha toxins bind voltage-independently at site-3 of sodium channels (Nav) and inhibit the inactivation of the activated channels, thereby blocking neuronal transmission. This Mesobuthus eupeus (Lesser Asian scorpion) protein is Sodium channel neurotoxin MeuNaTxalpha-7.